Here is a 152-residue protein sequence, read N- to C-terminus: Interleukin-1 family member 10 (152 aa).

This sequence belongs to the IL-1 family. In terms of assembly, interacts with cargo receptor TMED10; the interaction mediates the translocation from the cytoplasm into the ERGIC (endoplasmic reticulum-Golgi intermediate compartment) and thereby secretion.

The protein resides in the cytoplasm. Its subcellular location is the endoplasmic reticulum-Golgi intermediate compartment. The protein localises to the secreted. Its function is as follows. Cytokine with immunomodulatory activity. Alone, does not induce cytokine production, but reduces IL22 and IL17A production by T-cells in response to heat-killed Candida albicans. Reduces IL36G-induced production of IL8 by peripheral blood mononuclear cells. Increases IL6 production by dendritic cells stimulated by bacterial lipopolysaccharides (LPS). Ligand for IL-36R/IL1RL2. The polypeptide is Interleukin-1 family member 10 (Il1f10) (Mus musculus (Mouse)).